A 63-amino-acid chain; its full sequence is Putative conjugal transfer lipoprotein XF_a0011.1 (63 aa).

The N-terminal stretch at 1–15 is a signal peptide; sequence MRYTFGIVTVYLLAG. Residue Cys-16 is the site of N-palmitoyl cysteine attachment. Cys-16 carries S-diacylglycerol cysteine lipidation.

The protein to B.suis ORF12 in VirB region.

It localises to the cell inner membrane. In Xylella fastidiosa (strain 9a5c), this protein is Putative conjugal transfer lipoprotein XF_a0011.1.